Here is a 202-residue protein sequence, read N- to C-terminus: Small ribosomal subunit protein uS4c (202 aa).

The region spanning 90–148 (MRLDNVIFRLGMSSTIPGARQLVNHRHIMINDEMVDTPGYNCKPRDIITLKNISESRSG) is the S4 RNA-binding domain.

The protein belongs to the universal ribosomal protein uS4 family. In terms of assembly, part of the 30S ribosomal subunit. Contacts protein S5. The interaction surface between S4 and S5 is involved in control of translational fidelity.

It localises to the plastid. Its subcellular location is the chloroplast. Its function is as follows. One of the primary rRNA binding proteins, it binds directly to 16S rRNA where it nucleates assembly of the body of the 30S subunit. With S5 and S12 plays an important role in translational accuracy. This Haplomitrium hookeri (Hooker's flapwort) protein is Small ribosomal subunit protein uS4c (rps4).